The primary structure comprises 452 residues: Mitochondrial distribution and morphology protein 10 (452 aa).

This sequence belongs to the MDM10 family. In terms of assembly, component of the ER-mitochondria encounter structure (ERMES) or MDM complex, composed of MMM1, MDM10, MDM12 and MDM34. Associates with the mitochondrial outer membrane sorting assembly machinery SAM(core) complex.

It localises to the mitochondrion outer membrane. Its function is as follows. Component of the ERMES/MDM complex, which serves as a molecular tether to connect the endoplasmic reticulum and mitochondria. Components of this complex are involved in the control of mitochondrial shape and protein biogenesis and may function in phospholipid exchange. MDM10 is involved in the late assembly steps of the general translocase of the mitochondrial outer membrane (TOM complex). Functions in the TOM40-specific route of the assembly of outer membrane beta-barrel proteins, including the association of TOM40 with the receptor TOM22 and small TOM proteins. Can associate with the SAM(core) complex as well as the MDM12-MMM1 complex, both involved in late steps of the major beta-barrel assembly pathway, that is responsible for biogenesis of all outer membrane beta-barrel proteins. May act as a switch that shuttles between both complexes and channels precursor proteins into the TOM40-specific pathway. Plays a role in mitochondrial morphology and in the inheritance of mitochondria. The polypeptide is Mitochondrial distribution and morphology protein 10 (Kluyveromyces lactis (strain ATCC 8585 / CBS 2359 / DSM 70799 / NBRC 1267 / NRRL Y-1140 / WM37) (Yeast)).